Consider the following 370-residue polypeptide: Probable trehalose-phosphate phosphatase 6 (370 aa).

This sequence belongs to the trehalose phosphatase family. The cofactor is a divalent metal cation.

The catalysed reaction is alpha,alpha-trehalose 6-phosphate + H2O = alpha,alpha-trehalose + phosphate. It participates in glycan biosynthesis; trehalose biosynthesis. Its function is as follows. Removes the phosphate from trehalose 6-phosphate to produce free trehalose. Trehalose accumulation in plant may improve abiotic stress tolerance. In Oryza sativa subsp. japonica (Rice), this protein is Probable trehalose-phosphate phosphatase 6 (TPP6).